Here is a 186-residue protein sequence, read N- to C-terminus: Peptidyl-tRNA hydrolase (186 aa).

Tyr-14 serves as a coordination point for tRNA. The active-site Proton acceptor is the His-19. TRNA-binding residues include Phe-64, Asn-66, and Asn-112.

Belongs to the PTH family. Monomer.

It is found in the cytoplasm. It carries out the reaction an N-acyl-L-alpha-aminoacyl-tRNA + H2O = an N-acyl-L-amino acid + a tRNA + H(+). In terms of biological role, hydrolyzes ribosome-free peptidyl-tRNAs (with 1 or more amino acids incorporated), which drop off the ribosome during protein synthesis, or as a result of ribosome stalling. Catalyzes the release of premature peptidyl moieties from peptidyl-tRNA molecules trapped in stalled 50S ribosomal subunits, and thus maintains levels of free tRNAs and 50S ribosomes. The chain is Peptidyl-tRNA hydrolase from Listeria monocytogenes serovar 1/2a (strain ATCC BAA-679 / EGD-e).